The primary structure comprises 306 residues: Ornithine carbamoyltransferase (306 aa).

Residues 53–56, Q80, R104, and 131–134 contribute to the carbamoyl phosphate site; these read STRT and HPCQ. Residues N162, D219, and 223 to 224 each bind L-ornithine; that span reads SM. Carbamoyl phosphate contacts are provided by residues 259 to 260 and R287; that span reads CL.

This sequence belongs to the aspartate/ornithine carbamoyltransferase superfamily. OTCase family.

It localises to the cytoplasm. The enzyme catalyses carbamoyl phosphate + L-ornithine = L-citrulline + phosphate + H(+). The protein operates within amino-acid biosynthesis; L-arginine biosynthesis; L-arginine from L-ornithine and carbamoyl phosphate: step 1/3. Functionally, reversibly catalyzes the transfer of the carbamoyl group from carbamoyl phosphate (CP) to the N(epsilon) atom of ornithine (ORN) to produce L-citrulline. This is Ornithine carbamoyltransferase from Pseudomonas syringae pv. tomato (strain ATCC BAA-871 / DC3000).